The chain runs to 664 residues: Putative peroxisomal acyl-coenzyme A oxidase 1.2 (664 aa).

Cys-399 to Tyr-404 serves as a coordination point for FAD. The Microbody targeting signal signature appears at Ala-662–Leu-664.

It belongs to the acyl-CoA oxidase family. It depends on FAD as a cofactor.

The protein resides in the peroxisome. The catalysed reaction is a 2,3-saturated acyl-CoA + O2 = a (2E)-enoyl-CoA + H2O2. Catalyzes the desaturation of acyl-CoAs to 2-trans-enoyl-CoAs. The polypeptide is Putative peroxisomal acyl-coenzyme A oxidase 1.2 (ACX1.2) (Arabidopsis thaliana (Mouse-ear cress)).